We begin with the raw amino-acid sequence, 217 residues long: Serine acetyltransferase (217 aa).

It belongs to the transferase hexapeptide repeat family.

Its subcellular location is the cytoplasm. The enzyme catalyses L-serine + acetyl-CoA = O-acetyl-L-serine + CoA. Its pathway is amino-acid biosynthesis; L-cysteine biosynthesis; L-cysteine from L-serine: step 1/2. With respect to regulation, inhibited by cysteine. Catalyzes the acetylation of serine by acetyl-CoA to produce O-acetylserine (OAS). In Bacillus pumilus (strain SAFR-032), this protein is Serine acetyltransferase.